Reading from the N-terminus, the 141-residue chain is Mu-like prophage FluMu protein gp36 (141 aa).

The protein to phage Mu protein gp36.

In Haemophilus influenzae (strain ATCC 51907 / DSM 11121 / KW20 / Rd), this protein is Mu-like prophage FluMu protein gp36.